Consider the following 459-residue polypeptide: Glutamyl-tRNA(Gln) amidotransferase subunit A, mitochondrial (459 aa).

Catalysis depends on charge relay system residues K37 and S114. S138 acts as the Acyl-ester intermediate in catalysis.

Belongs to the amidase family. GatA subfamily. As to quaternary structure, subunit of the heterotrimeric GatFAB amidotransferase (AdT) complex, composed of A, B and F subunits.

Its subcellular location is the mitochondrion. It catalyses the reaction L-glutamyl-tRNA(Gln) + L-glutamine + ATP + H2O = L-glutaminyl-tRNA(Gln) + L-glutamate + ADP + phosphate + H(+). In terms of biological role, allows the formation of correctly charged Gln-tRNA(Gln) through the transamidation of misacylated Glu-tRNA(Gln) in the mitochondria. The reaction takes place in the presence of glutamine and ATP through an activated gamma-phospho-Glu-tRNA(Gln). The chain is Glutamyl-tRNA(Gln) amidotransferase subunit A, mitochondrial from Yarrowia lipolytica (strain CLIB 122 / E 150) (Yeast).